Here is a 100-residue protein sequence, read N- to C-terminus: Small ribosomal subunit protein uS14c (100 aa).

Belongs to the universal ribosomal protein uS14 family. In terms of assembly, part of the 30S ribosomal subunit.

The protein localises to the plastid. Its subcellular location is the chloroplast. Its function is as follows. Binds 16S rRNA, required for the assembly of 30S particles. This Aethionema grandiflorum (Persian stone-cress) protein is Small ribosomal subunit protein uS14c.